The primary structure comprises 488 residues: Cytochrome P450 71A24 (488 aa).

A helical membrane pass occupies residues 3-23; it reads MMMMIILLLCSIILITILFFK. C433 provides a ligand contact to heme.

The protein belongs to the cytochrome P450 family. Heme serves as cofactor.

Its subcellular location is the membrane. The sequence is that of Cytochrome P450 71A24 (CYP71A24) from Arabidopsis thaliana (Mouse-ear cress).